Reading from the N-terminus, the 125-residue chain is uncharacterized protein (125 aa).

The chain crosses the membrane as a helical span at residues 96–113; sequence LFMMSIVSSYVCYITVLL.

The protein resides in the membrane. This is an uncharacterized protein from Saccharomyces cerevisiae (strain ATCC 204508 / S288c) (Baker's yeast).